Here is a 319-residue protein sequence, read N- to C-terminus: Aspartate carbamoyltransferase catalytic subunit (319 aa).

2 residues coordinate carbamoyl phosphate: arginine 64 and threonine 65. Lysine 92 is an L-aspartate binding site. Residues arginine 114, histidine 142, and glutamine 145 each contribute to the carbamoyl phosphate site. Residues arginine 175 and arginine 229 each contribute to the L-aspartate site. 2 residues coordinate carbamoyl phosphate: glycine 270 and proline 271.

It belongs to the aspartate/ornithine carbamoyltransferase superfamily. ATCase family. As to quaternary structure, heterododecamer (2C3:3R2) of six catalytic PyrB chains organized as two trimers (C3), and six regulatory PyrI chains organized as three dimers (R2).

The catalysed reaction is carbamoyl phosphate + L-aspartate = N-carbamoyl-L-aspartate + phosphate + H(+). Its pathway is pyrimidine metabolism; UMP biosynthesis via de novo pathway; (S)-dihydroorotate from bicarbonate: step 2/3. Catalyzes the condensation of carbamoyl phosphate and aspartate to form carbamoyl aspartate and inorganic phosphate, the committed step in the de novo pyrimidine nucleotide biosynthesis pathway. The sequence is that of Aspartate carbamoyltransferase catalytic subunit from Rhodospirillum rubrum (strain ATCC 11170 / ATH 1.1.1 / DSM 467 / LMG 4362 / NCIMB 8255 / S1).